A 157-amino-acid chain; its full sequence is uncharacterized protein (157 aa).

Disordered stretches follow at residues 76–105 (AINQ…GPRG) and 132–157 (VRAP…RMRG). Residues 135–148 (PSTKPSKTSSSNNP) show a composition bias toward low complexity.

The protein to M.pneumoniae MPN_091 and MPN_413.

This is an uncharacterized protein from Mycoplasma pneumoniae (strain ATCC 29342 / M129 / Subtype 1) (Mycoplasmoides pneumoniae).